Here is a 614-residue protein sequence, read N- to C-terminus: DBH-like monooxygenase protein 1 (614 aa).

Residues 1-22 (MRPLRPWALLLGALLGAAAAAA) form the signal peptide. Over 23 to 592 (RRYPHVAVLD…SSSCLPCSLS (570 aa)) the chain is Lumenal. Positions 35–148 (AAYRLLWGRR…STVRVIWAYH (114 aa)) constitute a DOMON domain. Asn114 carries N-linked (GlcNAc...) asparagine glycosylation. The active site involves Tyr203. Intrachain disulfides connect Cys205/Cys257 and Cys242/Cys269. Cu cation is bound by residues His235 and His236. Asn247 is a glycosylation site (N-linked (GlcNAc...) asparagine). Positions 307, 389, 391, and 464 each coordinate Cu cation. 3 disulfide bridges follow: Cys364–Cys480, Cys368–Cys550, and Cys443–Cys465. His389 is a catalytic residue. N-linked (GlcNAc...) asparagine glycosylation is found at Asn476 and Asn517. A helical membrane pass occupies residues 593–613 (LTLLFVVYVASSTIGNFGPVV).

This sequence belongs to the copper type II ascorbate-dependent monooxygenase family. Requires Cu(2+) as cofactor.

The protein localises to the endoplasmic reticulum membrane. The polypeptide is DBH-like monooxygenase protein 1 (MOXD1) (Gallus gallus (Chicken)).